Consider the following 442-residue polypeptide: Probable glycine dehydrogenase (decarboxylating) subunit 1 (442 aa).

The protein belongs to the GcvP family. N-terminal subunit subfamily. In terms of assembly, the glycine cleavage system is composed of four proteins: P, T, L and H. In this organism, the P 'protein' is a heterodimer of two subunits.

It carries out the reaction N(6)-[(R)-lipoyl]-L-lysyl-[glycine-cleavage complex H protein] + glycine + H(+) = N(6)-[(R)-S(8)-aminomethyldihydrolipoyl]-L-lysyl-[glycine-cleavage complex H protein] + CO2. The glycine cleavage system catalyzes the degradation of glycine. The P protein binds the alpha-amino group of glycine through its pyridoxal phosphate cofactor; CO(2) is released and the remaining methylamine moiety is then transferred to the lipoamide cofactor of the H protein. The protein is Probable glycine dehydrogenase (decarboxylating) subunit 1 of Geotalea uraniireducens (strain Rf4) (Geobacter uraniireducens).